The chain runs to 683 residues: Phenoloxidase 3 (683 aa).

The propeptide occupies 1–48 (MADKKNLLLLFDHPTEPVFMDKGGNGTVFDVPDSYVTDRYNQMCKKVQ). H209, H213, and H239 together coordinate Cu cation. The active-site Proton acceptor is the E351. The N-linked (GlcNAc...) asparagine glycan is linked to N358. Residues H366, H370, and H406 each contribute to the Cu cation site. 2 N-linked (GlcNAc...) asparagine glycosylation sites follow: N492 and N546. Disulfide bonds link C574–C617 and C576–C624.

Belongs to the tyrosinase family. It depends on Cu(2+) as a cofactor. Upon activation, a trypsin type protease cleaves prophenol oxidase to yield the active enzyme.

The protein resides in the secreted. It catalyses the reaction 2 L-dopa + O2 = 2 L-dopaquinone + 2 H2O. It carries out the reaction L-tyrosine + O2 = L-dopaquinone + H2O. In terms of biological role, this is a copper-containing oxidase that functions in the formation of pigments such as melanins and other polyphenolic compounds. Catalyzes the rate-limiting conversions of tyrosine to DOPA, DOPA to DOPA-quinone and possibly 5,6 dihydroxyindole to indole-5'6 quinone. The chain is Phenoloxidase 3 (PPO3) from Drosophila melanogaster (Fruit fly).